Reading from the N-terminus, the 264-residue chain is Major prion protein (264 aa).

The signal sequence occupies residues 1-24 (MVKSHIGSWILVLFVAMWSDVGLC). The segment at 25 to 241 (KKRPKPGGGW…ESQAYYQRGA (217 aa)) is interaction with GRB2, ERI3 and SYN1. The interval 28–119 (PKPGGGWNTG…WNKPSKPKTN (92 aa)) is disordered. 6 repeat units span residues 54–62 (PQGGGGWGQ), 63–70 (PHGGGWGQ), 71–78 (PHGGGWGQ), 79–86 (PHGGGWGQ), 87–94 (PHGGGWGQ), and 95–103 (PHGGGGWGQ). A 6 X 8 AA tandem repeats of P-H-G-G-G-W-G-Q region spans residues 54 to 103 (PQGGGGWGQPHGGGWGQPHGGGWGQPHGGGWGQPHGGGWGQPHGGGGWGQ). Gly residues predominate over residues 55-105 (QGGGGWGQPHGGGWGQPHGGGWGQPHGGGWGQPHGGGWGQPHGGGGWGQGG). His-72, Gly-73, Gly-74, His-80, Gly-81, Gly-82, His-88, Gly-89, Gly-90, His-96, Gly-98, and Gly-99 together coordinate Cu(2+). Cys-190 and Cys-225 are oxidised to a cystine. Asn-192 and Asn-208 each carry an N-linked (GlcNAc...) asparagine glycan. Ala-241 carries the GPI-anchor amidated alanine lipid modification. Positions 242–264 (SVILFSSPPVILLISFLIFLIVG) are cleaved as a propeptide — removed in mature form.

The protein belongs to the prion family. As to quaternary structure, monomer and homodimer. Has a tendency to aggregate into amyloid fibrils containing a cross-beta spine, formed by a steric zipper of superposed beta-strands. Soluble oligomers may represent an intermediate stage on the path to fibril formation. Copper binding may promote oligomerization. Interacts with GRB2, APP, ERI3/PRNPIP and SYN1. Mislocalized cytosolically exposed PrP interacts with MGRN1; this interaction alters MGRN1 subcellular location and causes lysosomal enlargement. Interacts with KIAA1191.

It is found in the cell membrane. The protein resides in the golgi apparatus. Functionally, its primary physiological function is unclear. Has cytoprotective activity against internal or environmental stresses. May play a role in neuronal development and synaptic plasticity. May be required for neuronal myelin sheath maintenance. May play a role in iron uptake and iron homeostasis. Soluble oligomers are toxic to cultured neuroblastoma cells and induce apoptosis (in vitro). Association with GPC1 (via its heparan sulfate chains) targets PRNP to lipid rafts. Also provides Cu(2+) or Zn(2+) for the ascorbate-mediated GPC1 deaminase degradation of its heparan sulfate side chains. The polypeptide is Major prion protein (PRNP) (Antilope cervicapra (Blackbuck)).